Here is a 260-residue protein sequence, read N- to C-terminus: 5'-nucleotidase SurE (260 aa).

A divalent metal cation contacts are provided by D8, D9, S43, and N96.

The protein belongs to the SurE nucleotidase family. A divalent metal cation is required as a cofactor.

Its subcellular location is the cytoplasm. It catalyses the reaction a ribonucleoside 5'-phosphate + H2O = a ribonucleoside + phosphate. In terms of biological role, nucleotidase that shows phosphatase activity on nucleoside 5'-monophosphates. This Ruegeria pomeroyi (strain ATCC 700808 / DSM 15171 / DSS-3) (Silicibacter pomeroyi) protein is 5'-nucleotidase SurE.